The following is a 139-amino-acid chain: D-ribose pyranase (139 aa).

Catalysis depends on His-20, which acts as the Proton donor. Substrate is bound by residues Asp-28, His-106, and 128–130; that span reads YAN.

This sequence belongs to the RbsD / FucU family. RbsD subfamily. As to quaternary structure, homodecamer.

The protein resides in the cytoplasm. It catalyses the reaction beta-D-ribopyranose = beta-D-ribofuranose. It functions in the pathway carbohydrate metabolism; D-ribose degradation; D-ribose 5-phosphate from beta-D-ribopyranose: step 1/2. Functionally, catalyzes the interconversion of beta-pyran and beta-furan forms of D-ribose. The chain is D-ribose pyranase from Histophilus somni (strain 2336) (Haemophilus somnus).